We begin with the raw amino-acid sequence, 364 residues long: Peptidoglycan transport system permease protein YejB (364 aa).

6 helical membrane passes run 9-29 (LALM…VIQF), 134-154 (SASL…PLGI), 171-191 (IIII…IVLF), 219-239 (IIDY…SAFA), 283-303 (IVIA…SLLI), and 325-345 (YPIV…VGLL). The 220-residue stretch at 131-350 (LPVSASLGFW…VVGLLSDLIY (220 aa)) folds into the ABC transmembrane type-1 domain.

It belongs to the binding-protein-dependent transport system permease family. As to quaternary structure, the complex is composed of one ATP-binding protein (YejF), two transmembrane proteins (YejB and YejE) and a solute-binding protein (YepA or YejA).

The protein localises to the cell inner membrane. Its function is as follows. Part of the ABC transporter complex YejBEF-YepA involved in the uptake of muropeptides, the breakdown products of cell wall peptidoglycan. The import of muropeptides into the cell enables peptidoglycan recycling, which is vital for cell wall integrity in this bacterium. Is also probably part of the ABC transporter complex YejABEF, which is likely involved in broad-spectrum peptide import. Responsible for the translocation of the substrate across the membrane. The polypeptide is Peptidoglycan transport system permease protein YejB (Agrobacterium fabrum (strain C58 / ATCC 33970) (Agrobacterium tumefaciens (strain C58))).